A 369-amino-acid polypeptide reads, in one-letter code: ATP-dependent (S)-NAD(P)H-hydrate dehydratase (369 aa).

The region spanning 14 to 356 is the YjeF C-terminal domain; the sequence is LFQKARKLVP…DEVHESFLTL (343 aa). Residues Gly-126 and 179–185 each bind (6S)-NADPHX; that span reads NVNEFSR. Residues 231–235 and 250–259 contribute to the ATP site; these read KGPHD and GGLKRSGGQG. Position 260 (Asp-260) interacts with (6S)-NADPHX. Residues 284-306 are compositionally biased toward basic and acidic residues; the sequence is GEQEHSKEAENKEEVQGELESNK. A disordered region spans residues 284 to 307; the sequence is GEQEHSKEAENKEEVQGELESNKR.

The protein belongs to the NnrD/CARKD family. Mg(2+) is required as a cofactor.

It localises to the cytoplasm. It carries out the reaction (6S)-NADHX + ATP = ADP + phosphate + NADH + H(+). The enzyme catalyses (6S)-NADPHX + ATP = ADP + phosphate + NADPH + H(+). Catalyzes the dehydration of the S-form of NAD(P)HX at the expense of ATP, which is converted to ADP. Together with NAD(P)HX epimerase, which catalyzes the epimerization of the S- and R-forms, the enzyme allows the repair of both epimers of NAD(P)HX, a damaged form of NAD(P)H that is a result of enzymatic or heat-dependent hydration. This Emericella nidulans (strain FGSC A4 / ATCC 38163 / CBS 112.46 / NRRL 194 / M139) (Aspergillus nidulans) protein is ATP-dependent (S)-NAD(P)H-hydrate dehydratase.